The primary structure comprises 139 residues: Diuretic hormone 41 (139 aa).

Positions 1 to 20 are cleaved as a signal peptide; sequence MMWWALWCAVVVAAGSGVAA. Positions 21–79 are excised as a propeptide; sequence APAPDSLSPLDMVQMDSSAPDDETLYAMSPMAARYSAGAPWLYLLADMPRDSQTGSGRV. Residue Ile-122 is modified to Isoleucine amide.

Belongs to the sauvagine/corticotropin-releasing factor/urotensin I family. In terms of tissue distribution, expressed in corpora cardiaca (CC), corpora allata (CA), antennal lobe (AL) and gnathal ganglion (GNG) (at protein level). Expression in CC and CA detected in all animals, in GNG in most animals, expression in AL detected in few animals (at protein level).

The protein resides in the secreted. Its function is as follows. Regulation of fluid secretion. This Agrotis ipsilon (Black cutworm moth) protein is Diuretic hormone 41.